We begin with the raw amino-acid sequence, 47 residues long: Defensin-like protein 2 (47 aa).

4 disulfide bridges follow: Cys-3/Cys-47, Cys-14/Cys-36, Cys-20/Cys-41, and Cys-24/Cys-43.

The protein belongs to the DEFL family.

In Zea mays (Maize), this protein is Defensin-like protein 2.